Consider the following 145-residue polypeptide: 6-pyruvoyl tetrahydrobiopterin synthase (145 aa).

Ser-19 is subject to Phosphoserine; by PKG. His-24 lines the Zn(2+) pocket. The residue at position 28 (Ser-28) is a Phosphoserine. Cys-43 (proton acceptor) is an active-site residue. His-49 and His-51 together coordinate Zn(2+). His-90 functions as the Charge relay system in the catalytic mechanism. Tyr-128 is subject to Phosphotyrosine. Glu-134 functions as the Charge relay system in the catalytic mechanism.

The protein belongs to the PTPS family. In terms of assembly, homohexamer formed of two homotrimers in a head to head fashion. Zn(2+) is required as a cofactor. In terms of processing, phosphorylation of Ser-19 is required for maximal enzyme activity.

It catalyses the reaction 7,8-dihydroneopterin 3'-triphosphate = 6-pyruvoyl-5,6,7,8-tetrahydropterin + triphosphate + H(+). It participates in cofactor biosynthesis; tetrahydrobiopterin biosynthesis; tetrahydrobiopterin from 7,8-dihydroneopterin triphosphate: step 1/3. Involved in the biosynthesis of tetrahydrobiopterin, an essential cofactor of aromatic amino acid hydroxylases. Catalyzes the transformation of 7,8-dihydroneopterin triphosphate into 6-pyruvoyl tetrahydropterin. This chain is 6-pyruvoyl tetrahydrobiopterin synthase (PTS), found in Homo sapiens (Human).